Reading from the N-terminus, the 317-residue chain is Tetraspanin-15 (317 aa).

A disordered region spans residues 1–43 (MADNAQVVPVEEPAATATATATATATTEPEAKSSDQMESQSDN). Residues 1–60 (MADNAQVVPVEEPAATATATATATATTEPEAKSSDQMESQSDNKPPMGTLMALVNILAAG) are Cytoplasmic-facing. Over residues 7-28 (VVPVEEPAATATATATATATTE) the composition is skewed to low complexity. A helical transmembrane segment spans residues 61–81 (VLPIFTFVLSLTLLGYAVWLL). Topologically, residues 82–96 (YMRSYDCEDILGLPR) are extracellular. The helical transmembrane segment at 97–117 (VQTLASVGLLAVFVVSNAALF) threads the bilayer. At 118-126 (LRRKFPMPA) the chain is on the cytoplasmic side. Residues 127–147 (LVVMVVVLLLMLFIGLAYAGV) traverse the membrane as a helical segment. The Extracellular segment spans residues 148-287 (NEMQSRRFPA…IRSVRRKWWQ (140 aa)). A glycan (N-linked (GlcNAc...) asparagine) is linked at asparagine 224. Residues 288–308 (LGIFLIVISILLLMSHLLIFL) form a helical membrane-spanning segment. At 309 to 317 (ATFWERFKG) the chain is on the cytoplasmic side.

This sequence belongs to the tetraspanin (TM4SF) family.

The protein resides in the membrane. In terms of biological role, may be involved in the regulation of cell differentiation. The sequence is that of Tetraspanin-15 (TET15) from Arabidopsis thaliana (Mouse-ear cress).